We begin with the raw amino-acid sequence, 788 residues long: Protocadherin beta-18 (788 aa).

Positions 1 to 28 are cleaved as a signal peptide; sequence MEPGKGRAQPTRQVLLFFVFLGGSLVYS. Cadherin domains are found at residues 29–133, 134–242, 243–347, 348–452, and 453–562; these read ETWS…TPTF, LNNH…APEF, EKPV…PPEI, AMTS…APAF, and TQTS…SPFV. The Extracellular portion of the chain corresponds to 29 to 691; it reads ETWSYSIAEE…AQADSLTVYL (663 aa). Asparagine 169 carries an N-linked (GlcNAc...) asparagine glycan. Asparagine 419 and asparagine 437 each carry an N-linked (GlcNAc...) asparagine glycan. Asparagine 568 is a glycosylation site (N-linked (GlcNAc...) asparagine). One can recognise a Cadherin 6 domain in the interval 569 to 672; that stretch reads GSAPCTELVP…LVDGFSQPYL (104 aa). The helical transmembrane segment at 692–712 threads the bilayer; the sequence is VVALASVSSLFLFSVFLFVAV. Residues 713 to 788 are Cytoplasmic-facing; that stretch reads RLCRRSRAAS…DSDMEKAPPF (76 aa).

The protein localises to the cell membrane. Potential calcium-dependent cell-adhesion protein. This chain is Protocadherin beta-18 (PCDHB18), found in Pan troglodytes (Chimpanzee).